A 224-amino-acid polypeptide reads, in one-letter code: ATP-dependent dethiobiotin synthetase BioD (224 aa).

ATP is bound at residue 12-17; the sequence is GVGKTF. Threonine 16 contributes to the Mg(2+) binding site. Lysine 37 is an active-site residue. A substrate-binding site is contributed by threonine 41. Residues asparagine 52, 107 to 110, 167 to 168, 197 to 199, and glutamate 204 each bind ATP; these read EGAG, GS, and PEG. Positions 52 and 107 each coordinate Mg(2+).

This sequence belongs to the dethiobiotin synthetase family. Homodimer. The cofactor is Mg(2+).

It localises to the cytoplasm. It catalyses the reaction (7R,8S)-7,8-diammoniononanoate + CO2 + ATP = (4R,5S)-dethiobiotin + ADP + phosphate + 3 H(+). It functions in the pathway cofactor biosynthesis; biotin biosynthesis; biotin from 7,8-diaminononanoate: step 1/2. In terms of biological role, catalyzes a mechanistically unusual reaction, the ATP-dependent insertion of CO2 between the N7 and N8 nitrogen atoms of 7,8-diaminopelargonic acid (DAPA, also called 7,8-diammoniononanoate) to form a ureido ring. This chain is ATP-dependent dethiobiotin synthetase BioD, found in Corynebacterium glutamicum (strain ATCC 13032 / DSM 20300 / JCM 1318 / BCRC 11384 / CCUG 27702 / LMG 3730 / NBRC 12168 / NCIMB 10025 / NRRL B-2784 / 534).